A 488-amino-acid chain; its full sequence is L-amino oxidase (488 aa).

FAD is bound by residues 60-61 (MS), 80-81 (EA), R88, and 104-107 (GPMR). R107 and Y388 together coordinate substrate. Cysteines 347 and 428 form a disulfide. Residues E474 and 481–486 (GWIDST) each bind FAD. 481 to 482 (GW) is a binding site for substrate.

Belongs to the flavin monoamine oxidase family. FIG1 subfamily. Monomer. This is in contrast with most of its orthologs, that are non-covalently linked homodimers. The cofactor is FAD. N-glycosylated. Expressed by the venom gland.

It localises to the secreted. The catalysed reaction is an L-alpha-amino acid + O2 + H2O = a 2-oxocarboxylate + H2O2 + NH4(+). It catalyses the reaction L-leucine + O2 + H2O = 4-methyl-2-oxopentanoate + H2O2 + NH4(+). In terms of biological role, catalyzes an oxidative deamination of predominantly hydrophobic and aromatic L-amino acids, thus producing hydrogen peroxide that may contribute to the diverse toxic effects of this enzyme. Shows activity on L-Leu. Exhibits diverse biological activities, such as hemorrhage, hemolysis, edema, antibacterial and antiparasitic activities, as well as regulation of platelet aggregation. When tested on SW480 and SW620 human colon cancer cells, shows inhibition of cell proliferation, and induction of apoptosis, which is probably a consequence of the increased caspase-3 activity and the decreased Bcl-2 expression. The chain is L-amino oxidase from Trimeresurus purpureomaculatus (Mangrove pit viper).